A 72-amino-acid polypeptide reads, in one-letter code: MGKGWNASFHLGRRERLRQEVLHRVAGGPRPAPRDYTGHDGTHGSYYMKGWQSVDMPEILHHCLLYREKHYV.

The protein resides in the host cytoplasm. This is an uncharacterized protein from Enterobacteriaceae (Bacteriophage Mu).